We begin with the raw amino-acid sequence, 218 residues long: Ras-related protein Rab-4A (218 aa).

The GTP site is built by Gly23, Thr24, Gly25, Lys26, Ser27, Cys28, Ser42, His44, and Thr45. Ser27 contacts Mg(2+). Residues 44 to 49 (HTIGVE) carry the Switch 1 motif. 2 residues coordinate Mg(2+): Thr45 and Asp68. A Switch 2 motif is present at residues 70–79 (AGQERFRSVT). A GTP-binding site is contributed by Gly71. Gln72 bears the 5-glutamyl serotonin mark. Asn126, Lys127, Asp129, Ala157, and Leu158 together coordinate GTP. A Phosphoserine modification is found at Ser190. The residue at position 204 (Ser204) is a Phosphoserine; by CDK1. Residues Cys216 and Cys218 are each lipidated (S-geranylgeranyl cysteine). Cys218 carries the cysteine methyl ester modification.

It belongs to the small GTPase superfamily. Rab family. Interacts with RAB11FIP1, RABEP1, ZFYVE20 and RUFY1. Interacts with SGSM1, SGSM2 and SGSM3. Interacts (membrane-bound form) with NDRG1; the interaction involves NDRG1 in vesicular recycling of E-cadherin. Interacts (in GTP-bound form) with GRIPAP1. Interacts with RABEP1 and RBSN. Does not interact with HPS4. Mg(2+) serves as cofactor. In terms of processing, serotonylation of Gln-72 by TGM2 during activation and aggregation of platelets leads to constitutive activation of GTPase activity. Phosphorylated by CDK1 kinase during mitosis.

The protein resides in the membrane. It is found in the cytoplasm. Its subcellular location is the early endosome membrane. The protein localises to the recycling endosome membrane. It carries out the reaction GTP + H2O = GDP + phosphate + H(+). Regulated by guanine nucleotide exchange factors (GEFs) which promote the exchange of bound GDP for free GTP. Regulated by GTPase activating proteins (GAPs) which increase the GTP hydrolysis activity. Inhibited by GDP dissociation inhibitors (GDIs). The small GTPases Rab are key regulators of intracellular membrane trafficking, from the formation of transport vesicles to their fusion with membranes. Rabs cycle between an inactive GDP-bound form and an active GTP-bound form that is able to recruit to membranes different sets of downstream effectors directly responsible for vesicle formation, movement, tethering and fusion. RAB4A is involved in protein transport. Also plays a role in vesicular traffic. Mediates VEGFR2 endosomal trafficking to enhance VEGFR2 signaling. Acts as a regulator of platelet alpha-granule release during activation and aggregation of platelets. In Bos taurus (Bovine), this protein is Ras-related protein Rab-4A (RAB4A).